The sequence spans 121 residues: UPF0102 protein Syncc9902_1284 (121 aa).

The protein belongs to the UPF0102 family.

This is UPF0102 protein Syncc9902_1284 from Synechococcus sp. (strain CC9902).